We begin with the raw amino-acid sequence, 694 residues long: Polyribonucleotide nucleotidyltransferase (694 aa).

Mg(2+) contacts are provided by Asp485 and Asp491. Residues 552–611 (PRIETMQIKPNKIATVIGPGGKQIRQIIEEAGVQIDINDSGLVSISASSPQAIEKAKSMI) form the KH domain. The S1 motif domain occupies 621-689 (GKIYEGRVTS…EKGQYKLSHK (69 aa)).

The protein belongs to the polyribonucleotide nucleotidyltransferase family. The cofactor is Mg(2+).

Its subcellular location is the cytoplasm. The enzyme catalyses RNA(n+1) + phosphate = RNA(n) + a ribonucleoside 5'-diphosphate. In terms of biological role, involved in mRNA degradation. Catalyzes the phosphorolysis of single-stranded polyribonucleotides processively in the 3'- to 5'-direction. The polypeptide is Polyribonucleotide nucleotidyltransferase (Chlamydia caviae (strain ATCC VR-813 / DSM 19441 / 03DC25 / GPIC) (Chlamydophila caviae)).